The sequence spans 70 residues: Large ribosomal subunit protein bL31 (70 aa).

4 residues coordinate Zn(2+): Cys-16, Cys-18, Cys-36, and Cys-39.

Belongs to the bacterial ribosomal protein bL31 family. Type A subfamily. Part of the 50S ribosomal subunit. Requires Zn(2+) as cofactor.

Binds the 23S rRNA. In Tolumonas auensis (strain DSM 9187 / NBRC 110442 / TA 4), this protein is Large ribosomal subunit protein bL31.